A 69-amino-acid polypeptide reads, in one-letter code: DNA-directed RNA polymerase subunit epsilon (69 aa).

Belongs to the RNA polymerase subunit epsilon family. As to quaternary structure, RNAP is composed of a core of 2 alpha, a beta and a beta' subunit. The core is associated with a delta subunit, and at least one of epsilon or omega. When a sigma factor is associated with the core the holoenzyme is formed, which can initiate transcription.

The catalysed reaction is RNA(n) + a ribonucleoside 5'-triphosphate = RNA(n+1) + diphosphate. Its function is as follows. A non-essential component of RNA polymerase (RNAP). The sequence is that of DNA-directed RNA polymerase subunit epsilon from Bacillus velezensis (strain DSM 23117 / BGSC 10A6 / LMG 26770 / FZB42) (Bacillus amyloliquefaciens subsp. plantarum).